A 92-amino-acid chain; its full sequence is Exodeoxyribonuclease 7 small subunit (92 aa).

Positions 1–22 (MPKKNAISESTNSTPETAPAMT) are disordered. Residues 7–16 (ISESTNSTPE) are compositionally biased toward polar residues.

This sequence belongs to the XseB family. In terms of assembly, heterooligomer composed of large and small subunits.

It is found in the cytoplasm. The enzyme catalyses Exonucleolytic cleavage in either 5'- to 3'- or 3'- to 5'-direction to yield nucleoside 5'-phosphates.. Functionally, bidirectionally degrades single-stranded DNA into large acid-insoluble oligonucleotides, which are then degraded further into small acid-soluble oligonucleotides. The polypeptide is Exodeoxyribonuclease 7 small subunit (Photorhabdus laumondii subsp. laumondii (strain DSM 15139 / CIP 105565 / TT01) (Photorhabdus luminescens subsp. laumondii)).